The primary structure comprises 736 residues: Prospero homeobox protein 1 (736 aa).

Positions lysine 103–aspartate 135 are enriched in polar residues. The tract at residues lysine 103–arginine 146 is disordered. Residues arginine 163–arginine 168 carry the Nuclear localization signal motif. 5 disordered regions span residues proline 180–serine 220, tyrosine 261–glutamate 301, glutamate 319–glycine 344, asparagine 445–glutamine 465, and proline 499–arginine 518. The segment covering threonine 264–leucine 274 has biased composition (acidic residues). Positions glutamate 319–glutamine 335 are enriched in basic and acidic residues. The span at proline 450–histidine 460 shows a compositional bias: low complexity. Positions glycine 505 to arginine 518 are enriched in basic and acidic residues. The Prospero-type homeo domain maps to glutamine 576 to methionine 634. The tract at residues glutamine 576–leucine 734 is homeo-Prospero. Residues glutamate 635 to leucine 734 form the Prospero domain.

This sequence belongs to the Prospero homeodomain family. Expressed most actively in the developing lens and midgut and at lower levels in the developing brain, heart, muscle and retina.

It localises to the nucleus. Its function is as follows. Transcription factor which may be involved in developmental processes such as cell fate determination, gene transcriptional regulation and progenitor cell regulation in a number of organs. May be essential in the development and function of the eye. May play a role in the regulation of the circadian rhythm by repressing the expression of clock genes. The chain is Prospero homeobox protein 1 (PROX1) from Gallus gallus (Chicken).